The chain runs to 201 residues: dITP/XTP pyrophosphatase (201 aa).

9-14 is a substrate binding site; sequence SNNAGK. Residues E41 and D70 each coordinate Mg(2+). D70 functions as the Proton acceptor in the catalytic mechanism. Substrate contacts are provided by residues S71, 155 to 158, K178, and 183 to 184; these read FGYD and HR.

It belongs to the HAM1 NTPase family. Homodimer. The cofactor is Mg(2+).

It catalyses the reaction XTP + H2O = XMP + diphosphate + H(+). It carries out the reaction dITP + H2O = dIMP + diphosphate + H(+). The enzyme catalyses ITP + H2O = IMP + diphosphate + H(+). Pyrophosphatase that catalyzes the hydrolysis of nucleoside triphosphates to their monophosphate derivatives, with a high preference for the non-canonical purine nucleotides XTP (xanthosine triphosphate), dITP (deoxyinosine triphosphate) and ITP. Seems to function as a house-cleaning enzyme that removes non-canonical purine nucleotides from the nucleotide pool, thus preventing their incorporation into DNA/RNA and avoiding chromosomal lesions. This chain is dITP/XTP pyrophosphatase, found in Methylococcus capsulatus (strain ATCC 33009 / NCIMB 11132 / Bath).